We begin with the raw amino-acid sequence, 416 residues long: ASTRA-associated protein 1 (416 aa).

WD repeat units follow at residues 13-54, 58-95, 111-147, and 234-273; these read KHET…PFAG, ETKA…AVAI, VYEV…SESI, and HYPE…VNVS.

Belongs to the WD repeat ASA1 family. In terms of assembly, component of the ASTRA chromatin remodeling machinery complex.

It is found in the nucleus. Component of the ASTRA complex involved in chromatin remodeling. In Lachancea thermotolerans (strain ATCC 56472 / CBS 6340 / NRRL Y-8284) (Yeast), this protein is ASTRA-associated protein 1 (ASA1).